Here is a 367-residue protein sequence, read N- to C-terminus: Ribosomal lysine N-methyltransferase 5 (367 aa).

The interval 55 to 74 is disordered; it reads EGGRKKKRVRRRNKASSVEE. Basic residues predominate over residues 58–68; it reads RKKKRVRRRNK. S-adenosyl-L-methionine contacts are provided by residues W110, 170 to 172, D192, W256, and M288; that span reads GAG.

Belongs to the class I-like SAM-binding methyltransferase superfamily. RKM5 family.

Functionally, S-adenosyl-L-methionine-dependent protein-lysine N-methyltransferase that monomethylates 60S ribosomal protein L1 (RPL1A and RPL1B) at 'Lys-46'. This chain is Ribosomal lysine N-methyltransferase 5 (RKM5), found in Saccharomyces cerevisiae (strain VIN 13) (Baker's yeast).